A 166-amino-acid polypeptide reads, in one-letter code: MPSFDVVSEVNKVEVRNALDQANKEVSTRYDFKGSDARIEFNDKEVTLFADTEFQLDQVNDILVNKLSKRSVDVRSLDYGKLEKVSGNKVKKVLKIKEGLDSDLAKKIVKLLKDSKMKVQASIQGEAVRVSGAKRDVLQEAIALLKAEIASDLENGAPLQFNNFRD.

It belongs to the YajQ family.

Functionally, nucleotide-binding protein. The polypeptide is Nucleotide-binding protein CV_2047 (Chromobacterium violaceum (strain ATCC 12472 / DSM 30191 / JCM 1249 / CCUG 213 / NBRC 12614 / NCIMB 9131 / NCTC 9757 / MK)).